The sequence spans 767 residues: Photosystem I P700 chlorophyll a apoprotein A1 (767 aa).

8 helical membrane-spanning segments follow: residues 72-95 (IFSA…FHGA), 158-181 (LMAL…FHYH), 197-221 (LNHH…HVSA), 305-323 (IAHH…GHMY), 364-387 (WHAQ…QHMY), 403-429 (IGLF…IAMV), 451-473 (AIIS…LYIH), and 548-566 (FMVH…LILL). Positions 590 and 599 each coordinate [4Fe-4S] cluster. A run of 2 helical transmembrane segments spans residues 606–627 (HVFL…HFSW) and 681–703 (TSAY…MFLF). Residue H692 participates in chlorophyll a' binding. Positions 700 and 708 each coordinate chlorophyll a. W709 provides a ligand contact to phylloquinone. A helical transmembrane segment spans residues 741–761 (AVGVAHYLLGGIATTWAFFHA).

This sequence belongs to the PsaA/PsaB family. The PsaA/B heterodimer binds the P700 chlorophyll special pair and subsequent electron acceptors. PSI consists of a core antenna complex that captures photons, and an electron transfer chain that converts photonic excitation into a charge separation. The cyanobacterial PSI reaction center is composed of one copy each of PsaA,B,C,D,E,F,I,J,K,L,M and X, and forms trimeric complexes. It depends on PSI electron transfer chain: 5 chlorophyll a, 1 chlorophyll a', 2 phylloquinones and 3 4Fe-4S clusters. PSI core antenna: 90 chlorophyll a, 22 carotenoids, 3 phospholipids and 1 galactolipid. P700 is a chlorophyll a/chlorophyll a' dimer, A0 is one or more chlorophyll a, A1 is one or both phylloquinones and FX is a shared 4Fe-4S iron-sulfur center. as a cofactor.

Its subcellular location is the cellular thylakoid membrane. The catalysed reaction is reduced [plastocyanin] + hnu + oxidized [2Fe-2S]-[ferredoxin] = oxidized [plastocyanin] + reduced [2Fe-2S]-[ferredoxin]. Its function is as follows. PsaA and PsaB bind P700, the primary electron donor of photosystem I (PSI), as well as the electron acceptors A0, A1 and FX. PSI is a plastocyanin/cytochrome c6-ferredoxin oxidoreductase, converting photonic excitation into a charge separation, which transfers an electron from the donor P700 chlorophyll pair to the spectroscopically characterized acceptors A0, A1, FX, FA and FB in turn. Oxidized P700 is reduced on the lumenal side of the thylakoid membrane by plastocyanin or cytochrome c6. The polypeptide is Photosystem I P700 chlorophyll a apoprotein A1 (Parasynechococcus marenigrum (strain WH8102)).